We begin with the raw amino-acid sequence, 225 residues long: NAD(P)H-quinone oxidoreductase subunit K, chloroplastic (225 aa).

C43, C44, C108, and C139 together coordinate [4Fe-4S] cluster.

The protein belongs to the complex I 20 kDa subunit family. As to quaternary structure, NDH is composed of at least 16 different subunits, 5 of which are encoded in the nucleus. It depends on [4Fe-4S] cluster as a cofactor.

It is found in the plastid. It localises to the chloroplast thylakoid membrane. It catalyses the reaction a plastoquinone + NADH + (n+1) H(+)(in) = a plastoquinol + NAD(+) + n H(+)(out). It carries out the reaction a plastoquinone + NADPH + (n+1) H(+)(in) = a plastoquinol + NADP(+) + n H(+)(out). NDH shuttles electrons from NAD(P)H:plastoquinone, via FMN and iron-sulfur (Fe-S) centers, to quinones in the photosynthetic chain and possibly in a chloroplast respiratory chain. The immediate electron acceptor for the enzyme in this species is believed to be plastoquinone. Couples the redox reaction to proton translocation, and thus conserves the redox energy in a proton gradient. This chain is NAD(P)H-quinone oxidoreductase subunit K, chloroplastic, found in Nasturtium officinale (Watercress).